The primary structure comprises 125 residues: MQGNLPPEAQEKLEQLQDLQEKAQNVATQKQQAEQQLSEAETALDALGDIEESTTMYREVGELLVETEYDNAHDDLDEKVSDLEVRVETLQKQEDRVQEQFESLQEELQDMLGGAGGAMGGGPGA.

The protein belongs to the prefoldin subunit beta family. As to quaternary structure, heterohexamer of two alpha and four beta subunits.

It localises to the cytoplasm. Functionally, molecular chaperone capable of stabilizing a range of proteins. Seems to fulfill an ATP-independent, HSP70-like function in archaeal de novo protein folding. The polypeptide is Prefoldin subunit beta (Halobacterium salinarum (strain ATCC 29341 / DSM 671 / R1)).